The following is a 540-amino-acid chain: Alanine aminotransferase 2 (540 aa).

N6-(pyridoxal phosphate)lysine is present on Lys-358.

Belongs to the class-I pyridoxal-phosphate-dependent aminotransferase family. Alanine aminotransferase subfamily. Homodimer. It depends on pyridoxal 5'-phosphate as a cofactor.

It carries out the reaction L-alanine + 2-oxoglutarate = pyruvate + L-glutamate. It functions in the pathway amino-acid degradation; L-alanine degradation via transaminase pathway; pyruvate from L-alanine: step 1/1. Catalyzes the reversible transamination between alanine and 2-oxoglutarate to form pyruvate and glutamate. The sequence is that of Alanine aminotransferase 2 (gpt2) from Xenopus laevis (African clawed frog).